The primary structure comprises 241 residues: DnaA regulatory inactivator Hda (241 aa).

It belongs to the DnaA family. HdA subfamily. In terms of assembly, the active form seems to be an ADP-bound monomer. Forms the RIDA complex (regulatory inactivation of DnaA) of ATP-DnaA, ADP-Hda and the DNA-loaded beta sliding clamp (dnaN).

Functionally, mediates the interaction of DNA replication initiator protein DnaA with DNA polymerase subunit beta sliding clamp (dnaN). Stimulates hydrolysis of ATP-DnaA to ADP-DnaA, rendering DnaA inactive for reinitiation, a process called regulatory inhibition of DnaA or RIDA. The protein is DnaA regulatory inactivator Hda of Citrobacter koseri (strain ATCC BAA-895 / CDC 4225-83 / SGSC4696).